The primary structure comprises 219 residues: Ribose-5-phosphate isomerase A (219 aa).

Residues 28–31 (SGST), 81–84 (DGAD), and 94–97 (KGGG) contribute to the substrate site. Catalysis depends on E103, which acts as the Proton acceptor. K121 is a binding site for substrate.

The protein belongs to the ribose 5-phosphate isomerase family. In terms of assembly, homodimer.

It catalyses the reaction aldehydo-D-ribose 5-phosphate = D-ribulose 5-phosphate. It participates in carbohydrate degradation; pentose phosphate pathway; D-ribose 5-phosphate from D-ribulose 5-phosphate (non-oxidative stage): step 1/1. Catalyzes the reversible conversion of ribose-5-phosphate to ribulose 5-phosphate. In Haemophilus ducreyi (strain 35000HP / ATCC 700724), this protein is Ribose-5-phosphate isomerase A.